We begin with the raw amino-acid sequence, 350 residues long: Uroporphyrinogen decarboxylase (350 aa).

Substrate-binding positions include 28-32 (RQAGR), aspartate 78, tyrosine 155, serine 210, and histidine 325.

Belongs to the uroporphyrinogen decarboxylase family. As to quaternary structure, homodimer.

It localises to the cytoplasm. It catalyses the reaction uroporphyrinogen III + 4 H(+) = coproporphyrinogen III + 4 CO2. It functions in the pathway porphyrin-containing compound metabolism; protoporphyrin-IX biosynthesis; coproporphyrinogen-III from 5-aminolevulinate: step 4/4. Its function is as follows. Catalyzes the decarboxylation of four acetate groups of uroporphyrinogen-III to yield coproporphyrinogen-III. The chain is Uroporphyrinogen decarboxylase from Microcystis aeruginosa (strain NIES-843 / IAM M-2473).